We begin with the raw amino-acid sequence, 215 residues long: Ras-related protein Rab-5B (215 aa).

An N-acetylthreonine modification is found at Thr2. Positions 29, 30, 32, 33, 34, 35, 46, 47, 52, and 78 each coordinate GTP. Ser34 is a Mg(2+) binding site. 2 short sequence motifs (switch) span residues 44–56 (QFHEYQESTIGAA) and 77–93 (AGQERYHSLAPMYYRGA). Thr52 lines the Mg(2+) pocket. A Phosphoserine; by LRRK2 modification is found at Ser84. Asn133, Lys134, Asp136, Ala164, and Lys165 together coordinate GTP. The interval 186–215 (PQNLGGAAGRSRGVDLHEQSQQNKSQCCSN) is disordered. Over residues 204 to 215 (QSQQNKSQCCSN) the composition is skewed to low complexity. 2 S-geranylgeranyl cysteine lipidation sites follow: Cys212 and Cys213.

Belongs to the small GTPase superfamily. Rab family. Binds EEA1. Interacts with RIN2 and RIN3, which probably regulate its pathway, possibly by acting as GEFs. Interacts with GDI1, GDI2, CHML and CHM; phosphorylation at Ser-84 disrupts this interaction. Requires Mg(2+) as cofactor. Post-translationally, phosphorylation of Ser-84 in the switch II region by LRRK2 prevents the association of RAB regulatory proteins, including CHM, CHML and RAB GDP dissociation inhibitors GDI1 and GDI2. (Microbial infection) Glycosylated on arginine residues by S.typhimurium protein Ssek3.

The protein resides in the cell membrane. It localises to the early endosome membrane. The protein localises to the melanosome. It carries out the reaction GTP + H2O = GDP + phosphate + H(+). Regulated by guanine nucleotide exchange factors (GEFs) which promote the exchange of bound GDP for free GTP. Regulated by GTPase activating proteins (GAPs) which increase the GTP hydrolysis activity. Inhibited by GDP dissociation inhibitors (GDIs). Its function is as follows. The small GTPases Rab are key regulators of intracellular membrane trafficking, from the formation of transport vesicles to their fusion with membranes. Rabs cycle between an inactive GDP-bound form and an active GTP-bound form that is able to recruit to membranes different sets of downstream effectors directly responsible for vesicle formation, movement, tethering and fusion. The chain is Ras-related protein Rab-5B from Homo sapiens (Human).